We begin with the raw amino-acid sequence, 150 residues long: 5-hydroxytryptamine receptor 1B (150 aa).

At 1 to 83 the chain is on the extracellular side; that stretch reads VEARSRILKQ…AARERKATKT (83 aa). Residues 27–40 show a composition bias toward polar residues; sequence DSPGSTSSVTSINS. The segment at 27–50 is disordered; it reads DSPGSTSSVTSINSRAPDLPSESG. The helical transmembrane segment at 84-105 threads the bilayer; the sequence is LGIILGAFIVCWLPFFIISLAM. Over 106-115 the chain is Cytoplasmic; sequence PICKDACWFH. A helical transmembrane segment spans residues 116–138; the sequence is LAIFDFFTWLGYLNSLINPIIYT. Residues 133–137 carry the NPxxY motif; important for ligand-induced conformation changes and signaling motif; the sequence is NPIIY. Topologically, residues 139-150 are extracellular; that stretch reads MFNEDFKQAFHK.

This sequence belongs to the G-protein coupled receptor 1 family. Homodimer. Heterodimer with HTR1D. Post-translationally, phosphorylated. Desensitization of the receptor may be mediated by its phosphorylation. Palmitoylated.

The protein resides in the cell membrane. G-protein coupled receptor for 5-hydroxytryptamine (serotonin). Also functions as a receptor for ergot alkaloid derivatives, various anxiolytic and antidepressant drugs and other psychoactive substances, such as lysergic acid diethylamide (LSD). Ligand binding causes a conformation change that triggers signaling via guanine nucleotide-binding proteins (G proteins) and modulates the activity of downstream effectors, such as adenylate cyclase. HTR1B is coupled to G(i)/G(o) G alpha proteins and mediates inhibitory neurotransmission by inhibiting adenylate cyclase activity. Arrestin family members inhibit signaling via G proteins and mediate activation of alternative signaling pathways. Regulates the release of 5-hydroxytryptamine, dopamine and acetylcholine in the brain, and thereby affects neural activity, nociceptive processing, pain perception, mood and behavior. Besides, plays a role in vasoconstriction of cerebral arteries. This chain is 5-hydroxytryptamine receptor 1B (HTR1B), found in Sus scrofa (Pig).